We begin with the raw amino-acid sequence, 477 residues long: Ankyrin repeat, SAM and basic leucine zipper domain-containing protein 1 (477 aa).

A phosphoserine mark is found at serine 17, serine 18, and serine 20. ANK repeat units follow at residues 46 to 76, 80 to 109, 112 to 146, 150 to 179, 183 to 212, and 216 to 245; these read EKKEKFKKALTTGDVSLVLELLDSGIISVDA, YGWTPLMYAASVANAELVRVLLDRGANASF, DKQTILITACSAHGSEEQILKCVELLLSRNADPNV, RLMTPIMYAARDGHTQVVALLVASGAEVNT, NGYTALTWAARQGHKSIVLKLLELGANKML, and DGKLPSEIAKRNKHHEIFNLLTFTLNPLEG. In terms of domain architecture, SAM spans 274 to 336; the sequence is SYAAFGDLEV…KILAALKELE (63 aa).

As to quaternary structure, interacts with DDX4, PIWIL1, RANBP9 and TDRD1.

The protein resides in the cytoplasm. Plays a central role during spermatogenesis by repressing transposable elements and preventing their mobilization, which is essential for the germline integrity. Acts via the piRNA metabolic process, which mediates the repression of transposable elements during meiosis by forming complexes composed of piRNAs and Piwi proteins and governs the methylation and subsequent repression of transposons. Its association with pi-bodies suggests a participation in the primary piRNAs metabolic process. Required prior to the pachytene stage to facilitate the production of multiple types of piRNAs, including those associated with repeats involved in the regulation of retrotransposons. May act by mediating protein-protein interactions during germ cell maturation. In Callithrix jacchus (White-tufted-ear marmoset), this protein is Ankyrin repeat, SAM and basic leucine zipper domain-containing protein 1 (ASZ1).